A 524-amino-acid polypeptide reads, in one-letter code: RNA-splicing ligase RtcB homolog 1 (524 aa).

Mn(2+)-binding residues include aspartate 141, cysteine 144, histidine 249, histidine 281, and histidine 372. 248–252 (NHYLE) is a GMP binding site. GMP is bound by residues 372-373 (HN), 421-424 (GGSM), serine 428, 447-450 (HGAG), and lysine 523. Catalysis depends on histidine 447, which acts as the GMP-histidine intermediate.

It belongs to the RtcB family. As to quaternary structure, catalytic component of the tRNA-splicing ligase complex. Mn(2+) serves as cofactor.

The catalysed reaction is a 3'-end 3'-phospho-ribonucleotide-RNA + a 5'-end dephospho-ribonucleoside-RNA + GTP = a ribonucleotidyl-ribonucleotide-RNA + GMP + diphosphate. It catalyses the reaction a 3'-end 2',3'-cyclophospho-ribonucleotide-RNA + a 5'-end dephospho-ribonucleoside-RNA + GTP + H2O = a ribonucleotidyl-ribonucleotide-RNA + GMP + diphosphate + H(+). Catalytic subunit of the tRNA-splicing ligase complex that acts by directly joining spliced tRNA halves to mature-sized tRNAs by incorporating the precursor-derived splice junction phosphate into the mature tRNA as a canonical 3',5'-phosphodiester. May act as an RNA ligase with broad substrate specificity, and may function toward other RNAs. This is RNA-splicing ligase RtcB homolog 1 from Entamoeba histolytica (strain ATCC 30459 / HM-1:IMSS / ABRM).